Reading from the N-terminus, the 1041-residue chain is Protein SMAX1-like (1041 aa).

The Clp R domain maps to 8-188 (IQQTLTPEAA…KSIIEQSLSA (181 aa)). Repeat regions lie at residues 12 to 98 (LTPE…LDRL) and 117 to 188 (VSNA…SLSA). Residues 189–205 (PSPCPSAAASTTTAGPG) show a composition bias toward low complexity. Disordered stretches follow at residues 189–214 (PSPC…PSPL), 482–513 (EAEQ…QNKA), and 889–913 (EGSH…VKRS). Residues 482-495 (EAEQTDKPASRPEA) are compositionally biased toward basic and acidic residues. The segment covering 891 to 900 (SHNSSDVSVE) has biased composition (polar residues).

The protein belongs to the ClpA/ClpB family.

Its function is as follows. May act downstream of MAX2 to negatively regulate karrikins/strigolactone responses. Acts probably specifically in the karrikin pathway. May function in a transcriptional corepressor complex. The sequence is that of Protein SMAX1-like from Oryza sativa subsp. japonica (Rice).